A 257-amino-acid polypeptide reads, in one-letter code: Snake venom serine protease 3 (257 aa).

Residues 1–18 form the signal peptide; it reads MVLIRVLANLLILQLSYA. Residues 19-24 constitute a propeptide that is removed on maturation; it reads QKSSEL. The Peptidase S1 domain occupies 25 to 248; the sequence is VIGGDECNIN…YTDWIQNIIA (224 aa). Disulfide bonds link C31–C163, C50–C66, C98–C255, C142–C209, C174–C188, and C199–C224. The N-linked (GlcNAc...) asparagine glycan is linked to N44. H65 serves as the catalytic Charge relay system. N-linked (GlcNAc...) asparagine glycosylation occurs at N103. The Charge relay system role is filled by D110. N-linked (GlcNAc...) asparagine glycans are attached at residues N117 and N154. The active-site Charge relay system is S203. A glycan (N-linked (GlcNAc...) asparagine) is linked at N250.

This sequence belongs to the peptidase S1 family. Snake venom subfamily. Monomer. Expressed by the venom gland.

The protein localises to the secreted. Snake venom serine protease that may act in the hemostasis system of the prey. The sequence is that of Snake venom serine protease 3 (TLF3) from Protobothrops flavoviridis (Habu).